We begin with the raw amino-acid sequence, 203 residues long: Outer-membrane lipoprotein LolB (203 aa).

A signal peptide spans Met1–Ala17. Cys18 carries the N-palmitoyl cysteine lipid modification. Cys18 is lipidated: S-diacylglycerol cysteine.

Belongs to the LolB family. In terms of assembly, monomer.

It is found in the cell outer membrane. In terms of biological role, plays a critical role in the incorporation of lipoproteins in the outer membrane after they are released by the LolA protein. The polypeptide is Outer-membrane lipoprotein LolB (Klebsiella pneumoniae (strain 342)).